Here is a 268-residue protein sequence, read N- to C-terminus: Secreted RxLR effector protein 6 (268 aa).

The signal sequence occupies residues 1–19 (MRGAFYIAIALLVVRSRTA). A RxLR-dEER motif is present at residues 48–63 (RYLRDGLAHSAANEER). Positions 90 to 123 (IGGHSHTPKSKRKVNLSPAKSQSGIRKKSTSINK) are disordered. A compositionally biased stretch (polar residues) spans 107–123 (PAKSQSGIRKKSTSINK).

It belongs to the RxLR effector family.

It localises to the secreted. The protein resides in the host nucleus. It is found in the host cytoplasm. In terms of biological role, secreted effector that completely suppresses the host cell death induced by cell death-inducing proteins. The polypeptide is Secreted RxLR effector protein 6 (Plasmopara viticola (Downy mildew of grapevine)).